Reading from the N-terminus, the 184-residue chain is Rubrerythrin-2 (184 aa).

The region spanning 2-146 (SVKNAMTADF…DAQDSAKENK (145 aa)) is the Ferritin-like diiron domain. Fe(3+)-binding residues include E19, E52, E94, E97, E128, H131, C156, C159, C171, and C174. A Rubredoxin-like domain is found at 151-184 (GKVYICPVCGFTTLDENIEQCPICGVKKDKFQAF).

The cofactor is Fe(3+).

The catalysed reaction is H2O2 + NADH + H(+) = NAD(+) + 2 H2O. Its activity is regulated as follows. Rubredoxin (Rd) increases the NADH consumption rate by serving as an intermediary electron-transfer shuttle between NROR and Rbr2. In terms of biological role, functions as the terminal component of an NADH peroxidase (NADH:H(2)O(2) oxidoreductase) when using NADH:rubredoxin oxidoreductase (NROR) as the electron transport intermediary from NADH to Rbr2. The chain is Rubrerythrin-2 (rbr2) from Clostridium acetobutylicum (strain ATCC 824 / DSM 792 / JCM 1419 / IAM 19013 / LMG 5710 / NBRC 13948 / NRRL B-527 / VKM B-1787 / 2291 / W).